The sequence spans 177 residues: Peptide methionine sulfoxide reductase MsrA (177 aa).

C15 is a catalytic residue.

It belongs to the MsrA Met sulfoxide reductase family.

The enzyme catalyses L-methionyl-[protein] + [thioredoxin]-disulfide + H2O = L-methionyl-(S)-S-oxide-[protein] + [thioredoxin]-dithiol. It catalyses the reaction [thioredoxin]-disulfide + L-methionine + H2O = L-methionine (S)-S-oxide + [thioredoxin]-dithiol. Has an important function as a repair enzyme for proteins that have been inactivated by oxidation. Catalyzes the reversible oxidation-reduction of methionine sulfoxide in proteins to methionine. The sequence is that of Peptide methionine sulfoxide reductase MsrA from Listeria monocytogenes serotype 4a (strain HCC23).